Consider the following 293-residue polypeptide: 33 kDa chaperonin (293 aa).

2 disulfide bridges follow: Cys-238–Cys-240 and Cys-271–Cys-274.

Belongs to the HSP33 family. In terms of processing, under oxidizing conditions two disulfide bonds are formed involving the reactive cysteines. Under reducing conditions zinc is bound to the reactive cysteines and the protein is inactive.

It localises to the cytoplasm. Redox regulated molecular chaperone. Protects both thermally unfolding and oxidatively damaged proteins from irreversible aggregation. Plays an important role in the bacterial defense system toward oxidative stress. This chain is 33 kDa chaperonin, found in Staphylococcus epidermidis (strain ATCC 35984 / DSM 28319 / BCRC 17069 / CCUG 31568 / BM 3577 / RP62A).